We begin with the raw amino-acid sequence, 216 residues long: Redox-sensing transcriptional repressor Rex (216 aa).

The segment at residues 17-56 (IYFRYLTFLHDAGTDRISSAELSDAIKFDAATIRRDFSYF) is a DNA-binding region (H-T-H motif). 91–96 (GAGNLG) contributes to the NAD(+) binding site.

This sequence belongs to the transcriptional regulatory Rex family. As to quaternary structure, homodimer.

It is found in the cytoplasm. Functionally, modulates transcription in response to changes in cellular NADH/NAD(+) redox state. The protein is Redox-sensing transcriptional repressor Rex of Leuconostoc citreum (strain KM20).